The following is a 564-amino-acid chain: MSGDSKVWAHASADTWAVQNGISTYDLDTSSIKREKRDHNEQFNDGYGPPPGSASADPASYIADPAAFYNLYTNMGGAPTSTPMMHHEMGEAMKRDKESIYAHPLYPLLVLLFEKCELATSTPRDTSRDGSTSSDVCSSASFKDDLNEFVRHTQENADKQYYVPNPQLDQIMLQSIQMLRFHLLELEKVHELCDNFCNRYVVCLKGKMPLDIVGDERASSSQPPMSPGSMGHLGHSSSPSMAGGATPMHYPPPYEPQSVPLPENAGVMGGHPMEGSSMAYSMAGMAAAAASSSSSSNQAGDHPLANGGTLHSTAGASQTLLPIAVSSPSTCSSGGLRQDSTPLSGETPMGHANGNSMDSISEAGDEFSVCGSNDDGRDSVLSDSANGSQNGKRKVPKVFSKEAITKFRAWLFHNLTHPYPSEEQKKQLAKETGLTILQVNNWFINARRRIVQPMIDQNNRAGRSGQMNVCKNRRRNRSEQSPGPSPDSGSDSGANYSPDPSSLAASTAMPYPAEFYMQRTMPYGGFPSFTNPAMPFMNPMMGFQVAPTVDALSQQWVDLSAPHE.

5 disordered regions span residues 40 to 59, 216 to 270, 293 to 313, 328 to 397, and 455 to 503; these read NEQF…ADPA, ERAS…VMGG, SSSS…LHST, PSTC…KVPK, and IDQN…PSSL. Positions 133 to 218 constitute an MEIS N-terminal domain; the sequence is SSDVCSSASF…PLDIVGDERA (86 aa). Over residues 219–230 the composition is skewed to low complexity; the sequence is SSSQPPMSPGSM. Polar residues-rich tracts occupy residues 328 to 344 and 381 to 390; these read PSTC…TPLS and LSDSANGSQN. The homeobox; TALE-type DNA-binding region spans 392–454; the sequence is KRKVPKVFSK…NARRRIVQPM (63 aa). Composition is skewed to polar residues over residues 455 to 469 and 494 to 503; these read IDQN…QMNV and ANYSPDPSSL.

This sequence belongs to the TALE/MEIS homeobox family. In terms of assembly, forms a heterodimer with homeobox ceh-60.

It localises to the nucleus. In terms of biological role, acts redundantly with ceh-20 and ceh-40 to perform overlapping roles during embryogenesis. Required for postembryonic development of the ectoderm, including the Q, V and P cell lineages, playing a crucial role in ensuring that these cells and their descendants undergo their invariant patterns of cell division, migration, fusion and morphogenesis. Has a role in the mig-13 pathway to promote anterior migration of neuroblasts in the Q lineage. Required for multiple roles in regulating vulva development. Associates with homeobox ceh-60 to regulate gene expression, including repression of genes involved in innate immunity and activation of genes involved in vitellogenesis. Involved in lipid homeostasis, contributing to the formation of the cuticle. The polypeptide is Homeobox protein unc-62 (unc-62) (Caenorhabditis elegans).